A 230-amino-acid polypeptide reads, in one-letter code: 7-cyano-7-deazaguanine synthase (230 aa).

Residue 8–18 coordinates ATP; sequence LSGGMDSAVVT. Residues cysteine 186, cysteine 196, cysteine 199, and cysteine 202 each coordinate Zn(2+).

It belongs to the QueC family. Zn(2+) is required as a cofactor.

The enzyme catalyses 7-carboxy-7-deazaguanine + NH4(+) + ATP = 7-cyano-7-deazaguanine + ADP + phosphate + H2O + H(+). Its pathway is purine metabolism; 7-cyano-7-deazaguanine biosynthesis. Catalyzes the ATP-dependent conversion of 7-carboxy-7-deazaguanine (CDG) to 7-cyano-7-deazaguanine (preQ(0)). The polypeptide is 7-cyano-7-deazaguanine synthase (Xylella fastidiosa (strain M12)).